Consider the following 463-residue polypeptide: L-2-hydroxyglutarate dehydrogenase, mitochondrial (463 aa).

The N-terminal 51 residues, 1–51 (MVPALRYLVGACGRARGLFAGGSPGACGFASGRPRPLCGGSRSASTSSFDI), are a transit peptide targeting the mitochondrion. An N6-acetyllysine mark is found at lysine 104, lysine 155, and lysine 173.

This sequence belongs to the L2HGDH family. The cofactor is FAD. As to expression, widely expressed. Highly expressed in brain, testis and muscle. Expressed to a lower extent in lymphocytes, fibroblasts, keratinocytes, placenta, bladder, small intestine, liver and bone marrow.

It is found in the mitochondrion. It catalyses the reaction (S)-2-hydroxyglutarate + A = 2-oxoglutarate + AH2. This chain is L-2-hydroxyglutarate dehydrogenase, mitochondrial (L2HGDH), found in Homo sapiens (Human).